The primary structure comprises 123 residues: Nitrogen regulatory protein GlnK2 (123 aa).

Residues 38–40 and S49 each bind ATP; that span reads SLT. S49 is a binding site for ADP. O-UMP-tyrosine is present on Y62. ATP contacts are provided by residues V75, 98-101, and R114; that span reads GDGK. 98-101 provides a ligand contact to ADP; that stretch reads GDGK. 98 to 101 is an AMP binding site; it reads GDGK.

It belongs to the P(II) protein family. Homotrimer. Interacts with the glutamine synthetase 3 (GS3) in the presence of 2-oxoglutarate. Interacts in vitro with Amt1 after ammonium shock. May also interact with Amt2. Post-translationally, uridylylated on Tyr-62.

It is found in the cytoplasm. Binds the effectors ADP and ATP. Also binds AMP with high affinity, raising the possibility that AMP could be an important PII effector, at least in archaea. The change in the ATP/AMP ratio may be more relevant for describing the energy status in the cells than the ATP/ADP ratio alone. In terms of biological role, involved in the regulation of nitrogen metabolism. Regulates the activity of its targets by protein-protein interaction in response to the nitrogen status of the cell. Increases the activity of the glutamine synthetase 3 in the presence of 2-oxoglutarate. May regulate the activity of the ammonia channel Amt2 via direct interaction. The protein is Nitrogen regulatory protein GlnK2 of Haloferax mediterranei (strain ATCC 33500 / DSM 1411 / JCM 8866 / NBRC 14739 / NCIMB 2177 / R-4) (Halobacterium mediterranei).